The following is a 344-amino-acid chain: Calcium homeostasis modulator protein 3 (344 aa).

Topologically, residues 1 to 20 (MDKFRMLFQHFQSSSESVMN) are cytoplasmic. A central pore region spans residues 9-36 (QHFQSSSESVMNGICLLLAAVTVKLYSS). A helical membrane pass occupies residues 21–36 (GICLLLAAVTVKLYSS). The Extracellular segment spans residues 37-48 (FDFNCPCLVHYN). Disulfide bonds link C41-C126 and C43-C157. A helical membrane pass occupies residues 49–71 (ALYGLGLLLTPPLALFLCGLLAN). Over 72–98 (RQSVVMVEEWRRPAGHRRKDPGIIRYM) the chain is Cytoplasmic. C99 carries S-palmitoyl cysteine lipidation. Residues 99-124 (CSSVLQRALAAPLVWILLALLDGKCF) form a helical membrane-spanning segment. At 125–176 (VCAFSSSVDPEKFLDFANMTPSQVQLFLAKVPCKEDELVRDSPARKAVSRYL) the chain is on the extracellular side. N142 carries N-linked (GlcNAc...) asparagine glycosylation. The helical transmembrane segment at 177–202 (RCLSQAIGWSVTLLLIIAAFLARCLR) threads the bilayer. Residues C200 and C204 are each lipidated (S-palmitoyl cysteine). Residues 203-344 (PCFDQTVFLQ…GTRLSQHTDV (142 aa)) are Cytoplasmic-facing.

The protein belongs to the CALHM family. As to quaternary structure, associates with CALHM1 as a pore-forming subunit in a hetero-hexameric channel complex. Post-translationally, N-glycosylated. In terms of processing, palmitoylated by ZDHHC3 and ZDHHC15. Palmitoylation positively regulates CALHM1:CALHM3 channel conductance. Specifically expressed in circumvallate taste bud cells.

The protein localises to the basolateral cell membrane. The enzyme catalyses ATP(in) = ATP(out). The catalysed reaction is Ca(2+)(in) = Ca(2+)(out). It carries out the reaction Na(+)(in) = Na(+)(out). It catalyses the reaction K(+)(in) = K(+)(out). The enzyme catalyses chloride(in) = chloride(out). Its function is as follows. Pore-forming subunit of gustatory voltage-gated ion channels required for sensory perception of sweet, bitter and umami tastes. With CALHM1 forms a fast-activating voltage-gated ATP-release channel in type II taste bud cells, ATP acting as a neurotransmitter to activate afferent neural gustatory pathways. Acts both as a voltage-gated and calcium-activated ion channel: mediates neuronal excitability in response to membrane depolarization and low extracellular Ca(2+) concentration. Has poor ion selectivity and forms a wide pore (around 14 Angstroms) that mediates permeation of small ions including Ca(2+), Na(+), K(+) and Cl(-), as well as larger ions such as ATP(4-). The sequence is that of Calcium homeostasis modulator protein 3 from Homo sapiens (Human).